The following is a 187-amino-acid chain: Oligoribonuclease (187 aa).

Residues 7-170 enclose the Exonuclease domain; that stretch reads LCWLDMEMTG…DDILESIEEM (164 aa). The active site involves Y128.

It belongs to the oligoribonuclease family.

Its subcellular location is the cytoplasm. Functionally, 3'-to-5' exoribonuclease specific for small oligoribonucleotides. This is Oligoribonuclease from Neisseria meningitidis serogroup B (strain ATCC BAA-335 / MC58).